A 481-amino-acid chain; its full sequence is MQLQSYDPGNFYDELFFAPGQPRPQAAPLIDWMGQLSPEILRQHHETAQIALFNLGVTFRVYNDDQGVERIFPVDIIPRIIAEAEWRSLEKGLKQRIKALNCFLTDIYGPQNIVKDGIVPLDIVESASGFLKPCIGIKPPAGVWCHITGTDLVRDGAGKWFVLEDNLRVPSGISYVLENRRVMKSTFPDMFQTIPIQPVDSYPSQLLETLLNLAPPHLAAPVVVVLTPGINNSAYFEHSFLAQQMGVELVEGRDLVVADGYLQMRTTKGLQRVDVVYRRLDDDFIDPEVFRPDSLLGVPGLMEVYRQGRVALANAPGTGVADDKVIYAYVPEMINYYLKEEPLLANVPTYLCWREEDRNYVLDHLAELVVKSANEAGGYGMLMGPSASPQERAQFAERIRHNPRNYIAQPVLNLSRVPTLIGDQVEGRHVDLRPYILNRGDEIYVHPGGLTRVALRKGSLVVNSSQGGGSKDTWVLQGSTQ.

It to M.tuberculosis RV2411c.

This is an uncharacterized protein from Synechocystis sp. (strain ATCC 27184 / PCC 6803 / Kazusa).